The sequence spans 472 residues: 3-isopropylmalate dehydratase large subunit (472 aa).

C353, C414, and C417 together coordinate [4Fe-4S] cluster.

The protein belongs to the aconitase/IPM isomerase family. LeuC type 1 subfamily. As to quaternary structure, heterodimer of LeuC and LeuD. [4Fe-4S] cluster is required as a cofactor.

The catalysed reaction is (2R,3S)-3-isopropylmalate = (2S)-2-isopropylmalate. It participates in amino-acid biosynthesis; L-leucine biosynthesis; L-leucine from 3-methyl-2-oxobutanoate: step 2/4. Its function is as follows. Catalyzes the isomerization between 2-isopropylmalate and 3-isopropylmalate, via the formation of 2-isopropylmaleate. In Psychrobacter arcticus (strain DSM 17307 / VKM B-2377 / 273-4), this protein is 3-isopropylmalate dehydratase large subunit.